The primary structure comprises 202 residues: Recombination protein RecR (202 aa).

The segment at 56–71 adopts a C4-type zinc-finger fold; it reads CVVCGTVSDKEHCRIC. Positions 79 to 179 constitute a Toprim domain; it reads TVICVVEEPK…TVSRLASGLP (101 aa).

This sequence belongs to the RecR family.

Functionally, may play a role in DNA repair. It seems to be involved in an RecBC-independent recombinational process of DNA repair. It may act with RecF and RecO. The polypeptide is Recombination protein RecR (Rhodococcus jostii (strain RHA1)).